Reading from the N-terminus, the 131-residue chain is Beta/delta-urticatoxin-Dm2a (131 aa).

Positions 1-24 are cleaved as a signal peptide; that stretch reads MKSSATVVLLVAAVTAAMVMSSSA. A propeptide spanning residues 25-69 is cleaved from the precursor; it reads SGDAVMIDEHNNIMTSVEGKRGIGSSVVANGGNRKMANVLLSGWE. Disulfide bonds link C72–C88, C79–C93, C87–C101, C103–C117, C110–C122, and C116–C130.

Belongs to the urticatoxin-2 family. Expressed in trichomes, that are stiff epidermal hairs located on the surface of petioles and leaves.

It localises to the secreted. Plant defense neurotoxin that causes pain and systemic symptoms in mammals via modulation of voltage-gated sodium channels (Nav). Potent modulator of human Nav1.5/SCN5A (EC(50)=55 nM), Nav1.6/SCN8A (EC(50)=0.86 nM), and Nav1.7/SCN9A (EC(50)=208 nM), where it shifts the activation threshold to more negative potentials and delays fast inactivation. Also shifts the voltage-dependence of steady-state fast inactivation of Nav1.6/SCN8A, but not that of Nav1.5/SCN5A or Nav1.7/SCN9A. On Nav1.7/SCN9A, principally acts by binding to extracellular loops of domain IV (Nav site 3). In vivo, intraplantar injection into mice causes numerous dose-dependent, immediate, and long-lasting spontaneous pain behaviors, while no swelling is observed in the injected paw. At the highest doses tested, systemic symptoms including hypokinesia and hypersalivation are observed. The protein is Beta/delta-urticatoxin-Dm2a of Dendrocnide moroides (Gympie stinging tree).